A 304-amino-acid polypeptide reads, in one-letter code: C-type lectin domain-containing protein 141 (304 aa).

A signal peptide spans 1–19 (MRSSSTLLIAFGLFLASMS). A disordered region spans residues 29-100 (GSGGHRPPSS…TTPEPTTTKV (72 aa)). Over residues 51–99 (TKPPKSTSTPSTSTSTPTTTTTTTTTTTTTPTTTTTTTTTTTPEPTTTK) the composition is skewed to low complexity.

The polypeptide is C-type lectin domain-containing protein 141 (clec-141) (Caenorhabditis elegans).